The primary structure comprises 367 residues: Putative zinc metalloprotease mll0638 (367 aa).

Histidine 20 lines the Zn(2+) pocket. The active site involves glutamate 21. Histidine 24 provides a ligand contact to Zn(2+). The next 3 helical transmembrane spans lie at alanine 108 to alanine 130, leucine 291 to leucine 313, and methionine 343 to phenylalanine 365. One can recognise a PDZ domain in the interval threonine 121 to lysine 196.

Belongs to the peptidase M50B family. Zn(2+) is required as a cofactor.

The protein localises to the cell inner membrane. This is Putative zinc metalloprotease mll0638 from Mesorhizobium japonicum (strain LMG 29417 / CECT 9101 / MAFF 303099) (Mesorhizobium loti (strain MAFF 303099)).